A 272-amino-acid polypeptide reads, in one-letter code: Shikimate dehydrogenase (NADP(+)) (272 aa).

Residues 14–16 and T61 contribute to the shikimate site; that span reads SKS. The active-site Proton acceptor is the K65. Residues N86 and D102 each contribute to the shikimate site. Residues 126–130, 150–155, and M214 contribute to the NADP(+) site; these read GAGGA and NRTASK. Y216 contacts shikimate. G239 contributes to the NADP(+) binding site.

The protein belongs to the shikimate dehydrogenase family. As to quaternary structure, homodimer.

It catalyses the reaction shikimate + NADP(+) = 3-dehydroshikimate + NADPH + H(+). It functions in the pathway metabolic intermediate biosynthesis; chorismate biosynthesis; chorismate from D-erythrose 4-phosphate and phosphoenolpyruvate: step 4/7. Its function is as follows. Involved in the biosynthesis of the chorismate, which leads to the biosynthesis of aromatic amino acids. Catalyzes the reversible NADPH linked reduction of 3-dehydroshikimate (DHSA) to yield shikimate (SA). The chain is Shikimate dehydrogenase (NADP(+)) from Pseudoalteromonas atlantica (strain T6c / ATCC BAA-1087).